The chain runs to 625 residues: Grainyhead-like protein 2 homolog (625 aa).

The tract at residues 1 to 93 is transcription activation; the sequence is MSQESDNNKR…KASDSQEDQD (93 aa). 2 disordered regions span residues 198–222 and 428–452; these read ASHS…SFKD and EERK…SSDG. The Grh/CP2 DB domain maps to 244–482; it reads GSGTFQYTLE…DLHSQPVLFI (239 aa). Residues 440–451 show a composition bias toward polar residues; it reads QASQAQCNNSSD.

Belongs to the grh/CP2 family. Grainyhead subfamily. Homodimer, also forms heterodimers with GRHL1 or GRHL3.

Its subcellular location is the nucleus. The protein resides in the membrane. In terms of biological role, transcription factor playing an important role in primary neurulation and in epithelial development. Binds directly to the consensus DNA sequence 5'-AACCGGTT-3' acting as an activator and repressor on distinct target genes. During embryogenesis, plays unique and cooperative roles with GRHL3 in establishing distinct zones of primary neurulation. Essential for closure 3 (rostral end of the forebrain), functions cooperatively with GRHL3 in closure 2 (forebrain/midbrain boundary) and posterior neuropore closure. Regulates epithelial morphogenesis acting as a target gene-associated transcriptional activator of apical junctional complex components. Up-regulates of CLDN3 and CLDN4, as well as of RAB25, which increases the CLDN4 protein and its localization at tight junctions. Comprises an essential component of the transcriptional machinery that establishes appropriate expression levels of CLDN4 and CDH1 in different types of epithelia. Exhibits functional redundancy with GRHL3 in epidermal morphogenetic events such as eyelid fusion and epidermal wound repair. In lung, forms a regulatory loop with NKX2-1 that coordinates lung epithelial cell morphogenesis and differentiation. In keratinocytes, plays a role in telomerase activation during cellular proliferation, regulates TERT expression by binding to TERT promoter region and inhibiting DNA methylation at the 5'-CpG island, possibly by interfering with DNMT1 enzyme activity. In addition, impairs keratinocyte differentiation and epidermal function by inhibiting the expression of genes clustered at the epidermal differentiation complex (EDC) as well as GRHL1 and GRHL3 through epigenetic mechanisms. The sequence is that of Grainyhead-like protein 2 homolog (Grhl2) from Mus musculus (Mouse).